A 338-amino-acid chain; its full sequence is NADPH dehydrogenase (338 aa).

22–25 contacts FMN; it reads SPMC. Tyrosine 27 serves as a coordination point for substrate. FMN-binding residues include alanine 59 and glutamine 101. 163-166 contributes to the substrate binding site; that stretch reads HAAH. Residues arginine 214 and 306 to 307 each bind FMN; that span reads GR.

Belongs to the NADH:flavin oxidoreductase/NADH oxidase family. NamA subfamily. As to quaternary structure, homotetramer. Requires FMN as cofactor.

It carries out the reaction A + NADPH + H(+) = AH2 + NADP(+). Catalyzes the reduction of the double bond of an array of alpha,beta-unsaturated aldehydes and ketones. It also reduces the nitro group of nitroester and nitroaromatic compounds. It could have a role in detoxification processes. The polypeptide is NADPH dehydrogenase (Listeria innocua serovar 6a (strain ATCC BAA-680 / CLIP 11262)).